Consider the following 493-residue polypeptide: MATFKDACFHYRKITKLNRELLRIGANSVWIPVSSNKIKGWCIECCQLTELTFCHGCSLAHVCQWCIQNKRCFLDNEPHLLKLRTFESPITKEKLQCIIDLYNLLFPINPGIINRFKKIVNQRKCRNEFEQSWYNQLLFPITLNAAVFKFHSREVYVFGLYEGSSSCINLPYRIVNCIDLYDRLLLDQINFERMSSLPASLQSVYANKYFKLSRLPSMKLKQIYYSDFSKQNLINKCKIKSRIVLRNLTEFTWDSQISLHYDVINNREKILTALSTSSLKRFETHDLNLGRIKADIFELGHHCKPNFISSNHWQPASNVSQCRWCNVKYVFRNMDWKMESMYNELLSFIQACYKSNVNVGNCSSIENAYPLVKDMIWHSITKYIDQTIEKLFNVMNPVEVDGQQVISFHWQIDVALYIHIKMILKTETLPFALTLYQFGSIIKGIVNQWYDVTELDYLPLCTEQTDKLVKLEEEGKISEEYELLISDSEDDDQ.

The tract at residues 1-81 (MATFKDACFH…CFLDNEPHLL (81 aa)) is RNA-binding. Positions 42–79 (CIECCQLTELTFCHGCSLAHVCQWCIQNKRCFLDNEPH) are zinc-binding domain. The interval 82 to 176 (KLRTFESPIT…CINLPYRIVN (95 aa)) is important for cytoskeleton localization. An interaction with host IRF3 region spans residues 318 to 493 (NVSQCRWCNV…LISDSEDDDQ (176 aa)). Residues 483-486 (LLIS) carry the pLxIS motif motif.

This sequence belongs to the rotavirus NSP1 family. In terms of assembly, interacts (via C-terminus) with host IRF3; this interaction leads to IRF3 degradation. Interacts with host IRF7; this interaction leads to IRF7 degradation. Interacts with host CUL1 and CUL3.

The protein localises to the host cytoplasm. It is found in the host cytoskeleton. Its function is as follows. Plays a role in the inhibition of host innate immunity by inducing the degradation of key host factors required to activate interferon production such as IRF3, IRF5 or IRF7. Associates with components of cullin RING ligases (CRLs) including CUL1 or CUL3, which are essential multisubunit ubiquitination complexes, to modulate their activities. This Rotavirus A (isolate RVA/Dog/United States/K9/1981/G3P5A[3]) (RV-A) protein is Non-structural protein 1.